Reading from the N-terminus, the 147-residue chain is MALRACGLIIFRRHLIPKMDNSTIEFLLLQASDGIHHWTPPKGHVDPGENDLETALRETREETGIEASQLTIIEGFRRELNYVARQKPKTVIYWLAEVKDYNVEIRLSQEHQAYRWLGLEEACQLAQFKEMKATLQEGHQFLCSTPA.

The residue at position 2 (A2) is an N-acetylalanine. Residues 2–139 form the Nudix hydrolase domain; the sequence is ALRACGLIIF…EMKATLQEGH (138 aa). Positions 43–64 match the Nudix box motif; the sequence is GHVDPGENDLETALRETREETG.

It belongs to the Nudix hydrolase family. It depends on a divalent metal cation as a cofactor.

It carries out the reaction P(1),P(4)-bis(5'-guanosyl) tetraphosphate + H2O = GMP + GTP + 2 H(+). The enzyme catalyses a 5'-end CoA-ribonucleoside in mRNA + H2O = a 5'-end phospho-adenosine-phospho-ribonucleoside in mRNA + (R)-4'-phosphopantetheine + 2 H(+). It catalyses the reaction a 5'-end FAD-phospho-ribonucleoside in mRNA + H2O = a 5'-end phospho-adenosine-phospho-ribonucleoside in mRNA + FMN + 2 H(+). Its function is as follows. Catalyzes the asymmetric hydrolysis of diadenosine 5',5'''-P1,P4-tetraphosphate (Ap4A) to yield AMP and ATP. Exhibits decapping activity towards FAD-capped RNAs and dpCoA-capped RNAs in vitro. This is Bis(5'-nucleosyl)-tetraphosphatase [asymmetrical] (Nudt2) from Mus musculus (Mouse).